Here is a 311-residue protein sequence, read N- to C-terminus: 4-hydroxy-tetrahydrodipicolinate synthase (311 aa).

Residue threonine 51 participates in pyruvate binding. The Proton donor/acceptor role is filled by tyrosine 140. Lysine 168 (schiff-base intermediate with substrate) is an active-site residue. Pyruvate is bound at residue isoleucine 209.

The protein belongs to the DapA family. In terms of assembly, homotetramer; dimer of dimers.

Its subcellular location is the cytoplasm. It catalyses the reaction L-aspartate 4-semialdehyde + pyruvate = (2S,4S)-4-hydroxy-2,3,4,5-tetrahydrodipicolinate + H2O + H(+). It participates in amino-acid biosynthesis; L-lysine biosynthesis via DAP pathway; (S)-tetrahydrodipicolinate from L-aspartate: step 3/4. Catalyzes the condensation of (S)-aspartate-beta-semialdehyde [(S)-ASA] and pyruvate to 4-hydroxy-tetrahydrodipicolinate (HTPA). This is 4-hydroxy-tetrahydrodipicolinate synthase from Streptococcus pneumoniae (strain ATCC 700669 / Spain 23F-1).